We begin with the raw amino-acid sequence, 100 residues long: C-X-C motif chemokine 3 (100 aa).

The N-terminal stretch at 1–31 (MAPPTCRLLSAALVLLLLLATNHQATGAVVA) is a signal peptide. Cystine bridges form between cysteine 36-cysteine 62 and cysteine 38-cysteine 78.

Belongs to the intercrine alpha (chemokine CxC) family.

It localises to the secreted. Functionally, ligand for CXCR2. Has chemotactic activity for neutrophils. May play a role in inflammation and exert its effects on endothelial cells in an autocrine fashion. The sequence is that of C-X-C motif chemokine 3 from Mus musculus (Mouse).